The primary structure comprises 39 residues: Fuctinin-3 (39 aa).

The segment at 1-39 is disordered; that stretch reads KELNSNHDGADETSEKEQQEAIEHIDEVQNEIDRLNETA.

This sequence to human SET/PHAPII protein. In terms of assembly, oligomer.

It is found in the cytoplasm. Functionally, has a role in the physiological regulation of fucosylation processes. The chain is Fuctinin-3 from Rattus norvegicus (Rat).